Consider the following 378-residue polypeptide: Putative glutamate--cysteine ligase 2 (378 aa).

This sequence belongs to the glutamate--cysteine ligase type 2 family. YbdK subfamily.

It catalyses the reaction L-cysteine + L-glutamate + ATP = gamma-L-glutamyl-L-cysteine + ADP + phosphate + H(+). Functionally, ATP-dependent carboxylate-amine ligase which exhibits weak glutamate--cysteine ligase activity. The sequence is that of Putative glutamate--cysteine ligase 2 from Jannaschia sp. (strain CCS1).